The following is a 469-amino-acid chain: Citrate synthase, mitochondrial (469 aa).

A mitochondrion-targeting transit peptide spans 1–30 (MSFLTVSRLAPKLLNSKNATYFLVAARNAS). Residues H304 and H350 contribute to the active site. R359 contributes to the oxaloacetate binding site. D405 is a catalytic residue. R431 and R451 together coordinate oxaloacetate.

Belongs to the citrate synthase family. As to quaternary structure, homodimer.

It localises to the mitochondrion matrix. The enzyme catalyses oxaloacetate + acetyl-CoA + H2O = citrate + CoA + H(+). It functions in the pathway carbohydrate metabolism; tricarboxylic acid cycle; isocitrate from oxaloacetate: step 1/2. Its function is as follows. Key enzyme of the Krebs tricarboxylic acid cycle which catalyzes the synthesis of citrate from acetyl coenzyme A and oxaloacetate. This chain is Citrate synthase, mitochondrial (cs), found in Xiphias gladius (Swordfish).